The chain runs to 252 residues: Chitooligosaccharide deacetylase (252 aa).

Residues His61 and His125 each coordinate Mg(2+).

This sequence belongs to the YdjC deacetylase family. ChbG subfamily. As to quaternary structure, homodimer. It depends on Mg(2+) as a cofactor.

It localises to the cytoplasm. It carries out the reaction N,N'-diacetylchitobiose + H2O = N-acetyl-beta-D-glucosaminyl-(1-&gt;4)-D-glucosamine + acetate. The catalysed reaction is diacetylchitobiose-6'-phosphate + H2O = N'-monoacetylchitobiose-6'-phosphate + acetate. The protein operates within glycan degradation; chitin degradation. Functionally, involved in the degradation of chitin. ChbG is essential for growth on the acetylated chitooligosaccharides chitobiose and chitotriose but is dispensable for growth on cellobiose and chitosan dimer, the deacetylated form of chitobiose. Deacetylation of chitobiose-6-P and chitotriose-6-P is necessary for both the activation of the chb promoter by the regulatory protein ChbR and the hydrolysis of phosphorylated beta-glucosides by the phospho-beta-glucosidase ChbF. Catalyzes the removal of only one acetyl group from chitobiose-6-P to yield monoacetylchitobiose-6-P, the inducer of ChbR and the substrate of ChbF. In Salmonella paratyphi A (strain ATCC 9150 / SARB42), this protein is Chitooligosaccharide deacetylase.